Reading from the N-terminus, the 357-residue chain is GTPase Obg (357 aa).

The 159-residue stretch at 1–159 folds into the Obg domain; it reads MKFVDEAFID…RNLKLELKVL (159 aa). Positions 160–334 constitute an OBG-type G domain; it reads ADVGLLGMPN…LVQSIFQHVH (175 aa). GTP is bound by residues 166-173, 191-195, 213-216, 284-287, and 315-317; these read GMPNAGKS, FTTLH, DIPG, NKLD, and SAL. Mg(2+) contacts are provided by Ser173 and Thr193.

It belongs to the TRAFAC class OBG-HflX-like GTPase superfamily. OBG GTPase family. As to quaternary structure, monomer. Mg(2+) serves as cofactor.

Its subcellular location is the cytoplasm. Its function is as follows. An essential GTPase which binds GTP, GDP and possibly (p)ppGpp with moderate affinity, with high nucleotide exchange rates and a fairly low GTP hydrolysis rate. Plays a role in control of the cell cycle, stress response, ribosome biogenesis and in those bacteria that undergo differentiation, in morphogenesis control. The sequence is that of GTPase Obg from Acidovorax ebreus (strain TPSY) (Diaphorobacter sp. (strain TPSY)).